The chain runs to 72 residues: MSKDDVIEVEGTVVENLPNAMFRVELPNGHRVLAHVSGKIRMHFIRILPGDRVTVELSPYDLTRGRIVYRYK.

Positions 1-72 (MSKDDVIEVE…TRGRIVYRYK (72 aa)) constitute an S1-like domain.

It belongs to the IF-1 family. As to quaternary structure, component of the 30S ribosomal translation pre-initiation complex which assembles on the 30S ribosome in the order IF-2 and IF-3, IF-1 and N-formylmethionyl-tRNA(fMet); mRNA recruitment can occur at any time during PIC assembly.

Its subcellular location is the cytoplasm. In terms of biological role, one of the essential components for the initiation of protein synthesis. Stabilizes the binding of IF-2 and IF-3 on the 30S subunit to which N-formylmethionyl-tRNA(fMet) subsequently binds. Helps modulate mRNA selection, yielding the 30S pre-initiation complex (PIC). Upon addition of the 50S ribosomal subunit IF-1, IF-2 and IF-3 are released leaving the mature 70S translation initiation complex. This chain is Translation initiation factor IF-1 2, found in Symbiobacterium thermophilum (strain DSM 24528 / JCM 14929 / IAM 14863 / T).